Consider the following 122-residue polypeptide: Large ribosomal subunit protein uL18 (122 aa).

A compositionally biased stretch (basic residues) spans 1-21 (MSKLSRKQQTQKRHRRLRRHL). Residues 1 to 26 (MSKLSRKQQTQKRHRRLRRHLTGTSD) form a disordered region.

It belongs to the universal ribosomal protein uL18 family. In terms of assembly, part of the 50S ribosomal subunit; part of the 5S rRNA/L5/L18/L25 subcomplex. Contacts the 5S and 23S rRNAs.

In terms of biological role, this is one of the proteins that bind and probably mediate the attachment of the 5S RNA into the large ribosomal subunit, where it forms part of the central protuberance. In Parasynechococcus marenigrum (strain WH8102), this protein is Large ribosomal subunit protein uL18.